Consider the following 224-residue polypeptide: Deoxyribose-phosphate aldolase (224 aa).

Catalysis depends on Asp-92, which acts as the Proton donor/acceptor. Lys-155 acts as the Schiff-base intermediate with acetaldehyde in catalysis. Lys-184 serves as the catalytic Proton donor/acceptor.

The protein belongs to the DeoC/FbaB aldolase family. DeoC type 1 subfamily.

The protein localises to the cytoplasm. The catalysed reaction is 2-deoxy-D-ribose 5-phosphate = D-glyceraldehyde 3-phosphate + acetaldehyde. Its pathway is carbohydrate degradation; 2-deoxy-D-ribose 1-phosphate degradation; D-glyceraldehyde 3-phosphate and acetaldehyde from 2-deoxy-alpha-D-ribose 1-phosphate: step 2/2. Its function is as follows. Catalyzes a reversible aldol reaction between acetaldehyde and D-glyceraldehyde 3-phosphate to generate 2-deoxy-D-ribose 5-phosphate. The sequence is that of Deoxyribose-phosphate aldolase from Clostridium perfringens (strain 13 / Type A).